The following is a 280-amino-acid chain: Phosphatidylinositol N-acetylglucosaminyltransferase GPI2 subunit (280 aa).

Over methionine 1–arginine 53 the chain is Cytoplasmic. The helical transmembrane segment at leucine 54 to threonine 74 threads the bilayer. Position 75 (tyrosine 75) is a topological domain, extracellular. Residues isoleucine 76–isoleucine 96 traverse the membrane as a helical segment. At isoleucine 97 to serine 108 the chain is on the cytoplasmic side. Residues phenylalanine 109–leucine 129 traverse the membrane as a helical segment. Residues lysine 130 to threonine 135 are Extracellular-facing. A helical membrane pass occupies residues threonine 136–isoleucine 156. Residues serine 157–aspartate 189 lie on the Cytoplasmic side of the membrane. The helical transmembrane segment at valine 190–valine 210 threads the bilayer. At threonine 211–asparagine 220 the chain is on the extracellular side. A helical membrane pass occupies residues isoleucine 221–phenylalanine 241. Over alanine 242–aspartate 280 the chain is Cytoplasmic.

The protein belongs to the PIGC family. In terms of assembly, component of the phosphatidylinositol N-acetylglucosaminyltransferase (GPI-GlcNAc transferase) complex composed of at least GPI1, GPI2, GPI3, GPI15, GPI19 and ERI1. Interacts with ERI1.

It localises to the membrane. It carries out the reaction a 1,2-diacyl-sn-glycero-3-phospho-(1D-myo-inositol) + UDP-N-acetyl-alpha-D-glucosamine = a 6-(N-acetyl-alpha-D-glucosaminyl)-1-(1,2-diacyl-sn-glycero-3-phospho)-1D-myo-inositol + UDP + H(+). Its pathway is glycolipid biosynthesis; glycosylphosphatidylinositol-anchor biosynthesis. In terms of biological role, part of the complex catalyzing the transfer of N-acetylglucosamine from UDP-N-acetylglucosamine to phosphatidylinositol, the first step of GPI biosynthesis. This chain is Phosphatidylinositol N-acetylglucosaminyltransferase GPI2 subunit (GPI2), found in Saccharomyces cerevisiae (strain ATCC 204508 / S288c) (Baker's yeast).